The chain runs to 195 residues: HTH-type transcriptional regulator BetI (195 aa).

The region spanning 8 to 68 (SIRRRQLIDA…ATMRDITSQL (61 aa)) is the HTH tetR-type domain. Residues 31-50 (TIAQIARRAGVSTGIISHYF) constitute a DNA-binding region (H-T-H motif).

Its pathway is amine and polyamine biosynthesis; betaine biosynthesis via choline pathway [regulation]. Repressor involved in the biosynthesis of the osmoprotectant glycine betaine. It represses transcription of the choline transporter BetT and the genes of BetAB involved in the synthesis of glycine betaine. The protein is HTH-type transcriptional regulator BetI of Shigella flexneri serotype 5b (strain 8401).